The following is a 343-amino-acid chain: Heat-inducible transcription repressor HrcA (343 aa).

The protein belongs to the HrcA family.

Functionally, negative regulator of class I heat shock genes (grpE-dnaK-dnaJ and groELS operons). Prevents heat-shock induction of these operons. The chain is Heat-inducible transcription repressor HrcA from Mycolicibacterium paratuberculosis (strain ATCC BAA-968 / K-10) (Mycobacterium paratuberculosis).